The sequence spans 183 residues: Adenine phosphoribosyltransferase (183 aa).

Belongs to the purine/pyrimidine phosphoribosyltransferase family. Homodimer.

The protein localises to the cytoplasm. The enzyme catalyses AMP + diphosphate = 5-phospho-alpha-D-ribose 1-diphosphate + adenine. It functions in the pathway purine metabolism; AMP biosynthesis via salvage pathway; AMP from adenine: step 1/1. In terms of biological role, catalyzes a salvage reaction resulting in the formation of AMP, that is energically less costly than de novo synthesis. The sequence is that of Adenine phosphoribosyltransferase from Erwinia tasmaniensis (strain DSM 17950 / CFBP 7177 / CIP 109463 / NCPPB 4357 / Et1/99).